The primary structure comprises 625 residues: tRNA uridine 5-carboxymethylaminomethyl modification enzyme MnmG (625 aa).

11–16 (GAGHAG) is an FAD binding site. 271–285 (GPRYCPSIETKIVTF) provides a ligand contact to NAD(+).

Belongs to the MnmG family. Homodimer. Heterotetramer of two MnmE and two MnmG subunits. FAD serves as cofactor.

The protein localises to the cytoplasm. Functionally, NAD-binding protein involved in the addition of a carboxymethylaminomethyl (cmnm) group at the wobble position (U34) of certain tRNAs, forming tRNA-cmnm(5)s(2)U34. This Porphyromonas gingivalis (strain ATCC BAA-308 / W83) protein is tRNA uridine 5-carboxymethylaminomethyl modification enzyme MnmG.